We begin with the raw amino-acid sequence, 256 residues long: Pimeloyl-[acyl-carrier protein] methyl ester esterase (256 aa).

An AB hydrolase-1 domain is found at 15–242 (HLVLLHGWGL…AAHAPFISHP (228 aa)). Residues Trp-22, 82 to 83 (SL), and 143 to 147 (FLALQ) contribute to the substrate site. Ser-82 (nucleophile) is an active-site residue. Active-site residues include Asp-207 and His-235. His-235 contacts substrate.

The protein belongs to the AB hydrolase superfamily. Carboxylesterase BioH family. In terms of assembly, monomer.

The protein localises to the cytoplasm. The enzyme catalyses 6-carboxyhexanoyl-[ACP] methyl ester + H2O = 6-carboxyhexanoyl-[ACP] + methanol + H(+). It participates in cofactor biosynthesis; biotin biosynthesis. Its function is as follows. The physiological role of BioH is to remove the methyl group introduced by BioC when the pimeloyl moiety is complete. It allows to synthesize pimeloyl-ACP via the fatty acid synthetic pathway through the hydrolysis of the ester bonds of pimeloyl-ACP esters. In Salmonella agona (strain SL483), this protein is Pimeloyl-[acyl-carrier protein] methyl ester esterase.